The primary structure comprises 103 residues: Large ribosomal subunit protein bL21 (103 aa).

The protein belongs to the bacterial ribosomal protein bL21 family. As to quaternary structure, part of the 50S ribosomal subunit. Contacts protein L20.

In terms of biological role, this protein binds to 23S rRNA in the presence of protein L20. This Shewanella sediminis (strain HAW-EB3) protein is Large ribosomal subunit protein bL21.